Consider the following 441-residue polypeptide: tRNA modification GTPase MnmE (441 aa).

Residues Arg-22, Glu-80, and Lys-118 each coordinate (6S)-5-formyl-5,6,7,8-tetrahydrofolate. The region spanning 213 to 366 is the TrmE-type G domain; that stretch reads GIYIAIVGEP…LLNLIKQRVE (154 aa). GTP-binding positions include 223 to 228, 242 to 248, and 267 to 270; these read NSGKST, SEYAGTT, and DTAG. Mg(2+) is bound by residues Ser-227 and Thr-248. Lys-441 provides a ligand contact to (6S)-5-formyl-5,6,7,8-tetrahydrofolate.

Belongs to the TRAFAC class TrmE-Era-EngA-EngB-Septin-like GTPase superfamily. TrmE GTPase family. Homodimer. Heterotetramer of two MnmE and two MnmG subunits. Requires K(+) as cofactor.

The protein localises to the cytoplasm. Its function is as follows. Exhibits a very high intrinsic GTPase hydrolysis rate. Involved in the addition of a carboxymethylaminomethyl (cmnm) group at the wobble position (U34) of certain tRNAs, forming tRNA-cmnm(5)s(2)U34. The polypeptide is tRNA modification GTPase MnmE (Ehrlichia canis (strain Jake)).